A 524-amino-acid chain; its full sequence is Putative ATP-dependent RNA helicase R458 (524 aa).

Residues 125–338 enclose the Helicase ATP-binding domain; the sequence is VPELIQRKDT…NSYFRKYSPI (214 aa). 138–145 is a binding site for ATP; sequence FKSGTGKT. The DEFD box signature appears at 268–271; it reads DEFD. In terms of domain architecture, Helicase C-terminal spans 373-524; it reads IILDLLKQCR…QLPGDLSTLL (152 aa).

Belongs to the DEAD box helicase family. eIF4A subfamily.

It catalyses the reaction ATP + H2O = ADP + phosphate + H(+). Putative ATP-dependent RNA helicase. This Acanthamoeba polyphaga mimivirus (APMV) protein is Putative ATP-dependent RNA helicase R458.